Consider the following 953-residue polypeptide: MTAAENVCYTLINVPMDSEPPSEISLKNDLEKGDVKSKTEALKKVIIMILNGEKLPGLLMTIIRFVLPLQDHTIKKLLLVFWEIVPKTTPDGRLLHEMILVCDAYRKDLQHPNEFIRGSTLRFLCKLKEAELLEPLMPAIRACLEHRHSYVRRNAVLAIYTIYRNFEHLIPDAPELIHDFLVNEKDASCKRNAFMMLIHADQDRALDYLSTCIDQVQTFGDILQLVIVELIYKVCHANPSERARFIRCIYNLLQSSSPAVKYEAAGTLVTLSSAPTAIKAAAQCYIDLIIKESDNNVKLIVLDRLVELKEHPAHERVLQDLVMDILRVLSTPDLEVRKKTLQLALDLVSSRNVEELVIVLKKEVIKTNNVSEHEDTDKYRQLLVRTLHSCSVRFPDMAANVIPVLMEFLSDSNEAAAADVLEFVREAIQRFDNLRMLIVEKMLEVFHAIKSVKIYRGALWILGEYCSTKEDIQSVMTEVRRSLGEIPIVESEIKKEAGELKPEEEITVGPVQKLVTEMGTYATQSALSSSRPTKKEEDRPPLRGFLLDGDFFVAASLATTLTKIALRYVALVQEKKKQNSFVAEAMLLMATILHLGKSSLPKKPITDDDVDRISLCLKVLSECSPLMNDIFNKECRQSLSQMLSAKLEEEKLSQKKESEKRNVTVQPDDPISFMQLTAKNEMNCKEDQFQLSLLAAMGNTQRKEAADPLASKLNKVTQLTGFSDPVYAEAYVHVNQYDIVLDVLVVNQTSDTLQNCTLELATLGDLKLVEKPSPLTLAPHDFANIKANVKVASTENGIIFGNIVYDVSGAASDRNCVVLSDIHIDIMDYIQPATCTDAEFRQMWAEFEWENKVTVNTNMTDLNDYLQHILKSTNMKCLTPEKALSGYCGFMAANLYARSIFGEDALANVSIEKPVHQGPDAAVTGHIRIRAKSQGMALSLGDKINLSQKKTSL.

An N-acetylthreonine modification is found at Thr2. HEAT repeat units lie at residues 96–131 (HEMILVCDAYRKDLQHPNEFIRGSTLRFLCKLKEAE), 132–168 (LLEPLMPAIRACLEHRHSYVRRNAVLAIYTIYRNFEH), 240–276 (SERARFIRCIYNLLQSSSPAVKYEAAGTLVTLSSAPT), 277–314 (AIKAAAQCYIDLIIKESDNNVKLIVLDRLVELKEHPAH), 316–353 (RVLQDLVMDILRVLSTPDLEVRKKTLQLALDLVSSRNV), and 396–433 (DMAANVIPVLMEFLSDSNEAAAADVLEFVREAIQRFDN). The residue at position 494 (Lys494) is an N6-acetyllysine.

Oligomeric complex that consists of at least the alpha, beta, beta', gamma, delta, epsilon and zeta subunits. Interacts with CAPN8. Interacts with SCYL1 and PRKCE. Interacts with COPG1. Interacts with ARF1 (myristoylated); this interaction is required for binding of COPB1 to Golgi membranes. Interacts (via trunk domain) with ARF1 (via switch I region); the interaction is direct. Interacts with KCNK2 (via N-terminus); this interaction increases the channel-mediated whole cell currents and promotes plasma membrane expression of KCNK2. Interacts with STX17. Interacts with TMEM115. Interacts with TMEM41B. In terms of processing, proteolytically cleaved between Ser-528 and Ser-529 by CAPN8. In terms of tissue distribution, predominantly expressed in the upper one-third of the oxyntic mucosa and in most regions of the pyloric mucosa. Ubiquitously expressed including platelet, liver, heart, spleen, lung and kidney.

It localises to the cytoplasm. The protein resides in the golgi apparatus membrane. It is found in the cytoplasmic vesicle. The protein localises to the COPI-coated vesicle membrane. Its subcellular location is the cell membrane. It localises to the endoplasmic reticulum-Golgi intermediate compartment. The coatomer is a cytosolic protein complex that binds to dilysine motifs and reversibly associates with Golgi non-clathrin-coated vesicles, which further mediate biosynthetic protein transport from the ER, via the Golgi up to the trans Golgi network. Coatomer complex is required for budding from Golgi membranes, and is essential for the retrograde Golgi-to-ER transport of dilysine-tagged proteins. In mammals, the coatomer can only be recruited by membranes associated to ADP-ribosylation factors (ARFs), which are small GTP-binding proteins; the complex also influences the Golgi structural integrity, as well as the processing, activity, and endocytic recycling of LDL receptors. Involved in the Golgi disassembly and reassembly processes during cell cycle. Involved in autophagy by playing a role in early endosome function. Plays a role in organellar compartmentalization of secretory compartments including endoplasmic reticulum (ER)-Golgi intermediate compartment (ERGIC), Golgi, trans-Golgi network (TGN) and recycling endosomes, and in biosynthetic transport of CAV1. Plays a functional role in facilitating the transport of kappa-type opioid receptor mRNAs into axons and enhances translation of these proteins in cortical neurons. Required for limiting lipid storage in lipid droplets. Involved in lipid homeostasis by regulating the presence of perilipin family members PLIN2 and PLIN3 at the lipid droplet surface and promoting the association of adipocyte triglyceride lipase (PNPLA2) with the lipid droplet surface to mediate lipolysis. In Mus musculus (Mouse), this protein is Coatomer subunit beta (Copb1).